Consider the following 3123-residue polypeptide: Protein bark beetle (3123 aa).

The first 34 residues, 1–34 (MKLQHHKTNRQRISKPHRDPKWASICLWLLVTLA), serve as a signal peptide directing secretion. Residues 35–2714 (FSTHLARSQE…IIDPLSWRAD (2680 aa)) are Extracellular-facing. The segment at 83 to 104 (DVTVAPQGSTPSMTSSSSYTEL) is disordered. Low complexity predominate over residues 91–102 (STPSMTSSSSYT). An SRCR 1 domain is found at 191-295 (IRLVDGPTPV…YHNDLGIQCL (105 aa)). Intrachain disulfides connect Cys216/Cys284, Cys231/Cys294, and Cys262/Cys272. A glycan (N-linked (GlcNAc...) asparagine) is linked at Asn221. PbH1 repeat units lie at residues 358–380 (GLPP…NSTR), 382–404 (WAGF…FVNS), and 406–428 (QGAV…KYVG). Asn377, Asn389, and Asn403 each carry an N-linked (GlcNAc...) asparagine glycan. Residues Cys446 and Cys474 are joined by a disulfide bond. Residues 446–559 (CTLPTTSGQT…NGFFRMTSGD (114 aa)) form the CUB domain. N-linked (GlcNAc...) asparagine glycans are attached at residues Asn498 and Asn523. 3 PbH1 repeats span residues 562 to 584 (AYDL…AIDN), 586 to 609 (RSKL…HVTS), and 611 to 633 (AGDV…NITY). 8 N-linked (GlcNAc...) asparagine glycosylation sites follow: Asn615, Asn620, Asn630, Asn639, Asn658, Asn672, Asn702, and Asn709. PbH1 repeat units follow at residues 756 to 778 (NLQG…FINN) and 789 to 809 (PVKL…HVVS). N-linked (GlcNAc...) asparagine glycans are attached at residues Asn834, Asn900, and Asn1040. Positions 1071–1175 (VRLVGGAGAN…HENDVGLRCY (105 aa)) constitute an SRCR 2 domain. Intrachain disulfides connect Cys1096-Cys1164, Cys1109-Cys1174, and Cys1144-Cys1154. PbH1 repeat units lie at residues 1219–1241 (HARH…GIIY) and 1248–1270 (KSVN…SLKQ). Asn1375 carries N-linked (GlcNAc...) asparagine glycosylation. PbH1 repeat units lie at residues 1451 to 1475 (VPTL…YYNR) and 1489 to 1511 (NESI…LIRS). Residues Asn1489, Asn1520, and Asn1529 are each glycosylated (N-linked (GlcNAc...) asparagine). One copy of the PbH1 13 repeat lies at 1553–1575 (LFHYVIQDTTFEQNTHGGFQVSL). Residues Asn1584, Asn1593, and Asn1614 are each glycosylated (N-linked (GlcNAc...) asparagine). Residues 1722-1744 (LYRNLIAENEMDYNLVAGVRSAR) form a PbH1 14 repeat. 3 N-linked (GlcNAc...) asparagine glycosylation sites follow: Asn1883, Asn1920, and Asn1940. The region spanning 1912-2037 (IRLCTSANNC…DDVFVFVSCN (126 aa)) is the SRCR 3 domain. Disulfide bonds link Cys1950/Cys2025, Cys1963/Cys2036, and Cys2000/Cys2010. 2 PbH1 repeats span residues 2104–2126 (HKNP…NMIA) and 2128–2150 (SGKL…SIVS). 5 N-linked (GlcNAc...) asparagine glycosylation sites follow: Asn2139, Asn2231, Asn2251, Asn2314, and Asn2357. 3 PbH1 repeats span residues 2337–2361 (TPTL…FSTC), 2372–2393 (MNSL…RIRA), and 2401–2424 (SLRG…YVEG). N-linked (GlcNAc...) asparagine glycosylation is found at Asn2459, Asn2536, Asn2546, Asn2566, Asn2596, and Asn2636. Residues 2715–2735 (IFAISIISAFVLAIILLILVA) traverse the membrane as a helical segment. Residues 2736 to 3123 (FCWFAKSKHR…SHSQPLETAM (388 aa)) are Cytoplasmic-facing. 4 disordered regions span residues 2766 to 2789 (IDPQ…LSKG), 2961 to 2983 (YQRS…PFDQ), 2996 to 3015 (LYRP…ADMR), and 3025 to 3123 (RSSK…ETAM). A compositionally biased stretch (polar residues) spans 2778–2788 (YNMSSNGTLSK). The span at 2964 to 2973 (SSHSSFMPHR) shows a compositional bias: low complexity. 2 stretches are compositionally biased toward low complexity: residues 3047 to 3057 (PNVAPAGGPAQ) and 3068 to 3078 (SEESSPTTPSP). A compositionally biased stretch (polar residues) spans 3107-3123 (PLQTNGRSHSQPLETAM).

In terms of processing, N-glycosylated. Post-translationally, may be proteolytically cleaved in the extracellular domain. Expression detected in embryonic epithelia and central nervous system (at protein level). First detected during stage 13 in the tracheal system, the foregut, the hindgut, the salivary glands and the epidermis. Expression persists in these tissues until the end of embryogenesis. Expression in epithelia declines from late stage 15 and expression appears in the central nervous system during stage 16.

The protein localises to the cell membrane. It is found in the cell junction. The protein resides in the septate junction. It localises to the adherens junction. Its function is as follows. Required for the maturation but not the establishment of septate junctions in developing epithelial cells and is involved in epithelial cell adhesion during septate junction maturation. Plays a role in the proper localization of the septate junction core components pck/mega, kune, Nrx-IV and Nrg during late embryogenesis. Involved in the formation of tricellular junctions which mediate cell contact where three epithelial cells meet but not of bicellular junctions. Required for the accumulation of Gli at tricellular junctions. This chain is Protein bark beetle, found in Drosophila melanogaster (Fruit fly).